The following is a 290-amino-acid chain: Glyceraldehyde-3-phosphate dehydrogenase (290 aa).

D13 and R58 together coordinate NAD(+). Residues 129 to 131, T160, 189 to 190, and R212 each bind D-glyceraldehyde 3-phosphate; these read SCT and TG. C130 functions as the Nucleophile in the catalytic mechanism.

It belongs to the glyceraldehyde-3-phosphate dehydrogenase family. Homotetramer.

It is found in the cytoplasm. The catalysed reaction is D-glyceraldehyde 3-phosphate + phosphate + NAD(+) = (2R)-3-phospho-glyceroyl phosphate + NADH + H(+). It participates in carbohydrate degradation; glycolysis; pyruvate from D-glyceraldehyde 3-phosphate: step 1/5. This Lactarius deterrimus (False saffron milkcap) protein is Glyceraldehyde-3-phosphate dehydrogenase (GPD).